Reading from the N-terminus, the 304-residue chain is Granaticin polyketide synthase bifunctional cyclase/dehydratase (304 aa).

It participates in antifungal biosynthesis; monensin biosynthesis. Functionally, is needed for correct cyclization of the oligoketide leading to isochromanequinone formation. This chain is Granaticin polyketide synthase bifunctional cyclase/dehydratase, found in Streptomyces virginiae (Streptomyces cinnamonensis).